The primary structure comprises 85 residues: Cell division topological specificity factor (85 aa).

The protein belongs to the MinE family.

Functionally, prevents the cell division inhibition by proteins MinC and MinD at internal division sites while permitting inhibition at polar sites. This ensures cell division at the proper site by restricting the formation of a division septum at the midpoint of the long axis of the cell. This is Cell division topological specificity factor from Stutzerimonas stutzeri (strain A1501) (Pseudomonas stutzeri).